The chain runs to 149 residues: Ribonuclease H (149 aa).

In terms of domain architecture, RNase H type-1 spans 1 to 143 (MNQVVIYTDG…ADALANKGVD (143 aa)). Mg(2+) contacts are provided by Asp-9, Glu-47, Asp-69, and Asp-135.

Belongs to the RNase H family. As to quaternary structure, monomer. It depends on Mg(2+) as a cofactor.

Its subcellular location is the cytoplasm. The catalysed reaction is Endonucleolytic cleavage to 5'-phosphomonoester.. Its function is as follows. Endonuclease that specifically degrades the RNA of RNA-DNA hybrids. This Paracidovorax citrulli (strain AAC00-1) (Acidovorax citrulli) protein is Ribonuclease H.